The following is a 233-amino-acid chain: 6-carboxyhexanoate--CoA ligase (233 aa).

The protein belongs to the BioW family. As to quaternary structure, homodimer. Mg(2+) is required as a cofactor.

The catalysed reaction is heptanedioate + ATP + CoA = 6-carboxyhexanoyl-CoA + AMP + diphosphate. It functions in the pathway metabolic intermediate metabolism; pimeloyl-CoA biosynthesis; pimeloyl-CoA from pimelate: step 1/1. Its function is as follows. Catalyzes the transformation of pimelate into pimeloyl-CoA with concomitant hydrolysis of ATP to AMP. The polypeptide is 6-carboxyhexanoate--CoA ligase (Methanocaldococcus sp. (strain FS406-22)).